Reading from the N-terminus, the 764-residue chain is MGGAAVLDWMVQDGVRLENCRHDHPLAVLGPQPDDQGWTVRVWMPEAQKVTLLLGSQEIVTSTPNHPWIFEASTPSDPGSNYKLRVERGGITTEQHDPWAFRHEWMGEMDRHLFAEGNHHHIWQRMGAHLTQIDGISGVMFCLWAPNALTASVLGDLNSWDGRHHPMQKRLGGIWELFVPGLDAGTLYKYEIRSQEGHCYQKADPYGFQHEVRPDNSSVVARLEGYSWSDSSWMQDRDSRNALDQPISVYEMHIGSWIHASADEPWIQPDGQPRAPVPAADMKPGARLLTYAELSDRLIPYVKERGFTHIELMPITEHPFDGSWGYQVTGWYAPTSRYGTPDEFRAFVDRCHAEGIGVIIDWVPGHFPKDAHGLAFFDGTHLYEHGDPRIGEHKEWGTLIFNYSRNEVRNFLVANLVFWFEQFHIDGIRVDAVASMLYRDYLRPDGEWLPNENGGRENTEAVRFLQQANHVLFQHYPGALSIAEESTTWPMVTQPTDMGGLGFNLKWNMGWMHDMLDYFELDPWFRQFHQNNITFSIWYTYTENFMLALSHDEVVHGKSHLLHKMPGDDWQKYANTRALLAYMWTHPGKKTIFMGMEFGQRAEWNVWGDLEWDLLNYEPHKGIQRLVDDLNVLYKAQPALWRDDFDQFGFQWIDCNDNRHSVISFMRRDSASGTWLVVVANFTPQSHANYRVGVPLEGFYEEIFNTDAAKYGGSNLGNMGGKPTDACGIHGYEHSLDLCLPPLSLVVFQHDPKRTLIESSAPSD.

The active-site Nucleophile is aspartate 431. Glutamate 484 functions as the Proton donor in the catalytic mechanism.

This sequence belongs to the glycosyl hydrolase 13 family. GlgB subfamily. Monomer.

It catalyses the reaction Transfers a segment of a (1-&gt;4)-alpha-D-glucan chain to a primary hydroxy group in a similar glucan chain.. It participates in glycan biosynthesis; glycogen biosynthesis. In terms of biological role, catalyzes the formation of the alpha-1,6-glucosidic linkages in glycogen by scission of a 1,4-alpha-linked oligosaccharide from growing alpha-1,4-glucan chains and the subsequent attachment of the oligosaccharide to the alpha-1,6 position. The protein is 1,4-alpha-glucan branching enzyme GlgB of Synechococcus sp. (strain CC9902).